The following is a 194-amino-acid chain: Adenylate kinase (194 aa).

An ATP-binding site is contributed by 10-15 (GAGKGT). The tract at residues 30-59 (STGDMLRAAVAQQSEIGKRAKAVMDAGQLV) is NMP. Residues Thr-31, Arg-36, 57 to 59 (QLV), 85 to 88 (GYPR), and Gln-92 each bind AMP. The interval 126–142 (SRVAETIAKGAQVRSDD) is LID. An ATP-binding site is contributed by Arg-127. Residues Arg-139 and Arg-150 each contribute to the AMP site. Residue Ala-178 coordinates ATP.

It belongs to the adenylate kinase family. As to quaternary structure, monomer.

The protein localises to the cytoplasm. The catalysed reaction is AMP + ATP = 2 ADP. The protein operates within purine metabolism; AMP biosynthesis via salvage pathway; AMP from ADP: step 1/1. Catalyzes the reversible transfer of the terminal phosphate group between ATP and AMP. Plays an important role in cellular energy homeostasis and in adenine nucleotide metabolism. The sequence is that of Adenylate kinase from Brucella melitensis biotype 1 (strain ATCC 23456 / CCUG 17765 / NCTC 10094 / 16M).